A 430-amino-acid polypeptide reads, in one-letter code: MTSVVVVGTQWGDEGKGKITDFLSADAEVIARYQGGDNAGHTIVIDGKKFKLHLIPSGIFFPQKISVIGNGVVVNPKSLVKELAYLHNEGVTTDNLRISDRAQVILPYHIQLDQLQEDAKGDNKIGTTIKGIGPAYMDKAARVGIRIADLLDKDIFAERLRINLAEKNRLFEKMYDSTPLDFDAIFEEYYAYGQEIKQYVTDTSVILNDALDAGKRVLFEGAQGVMLDIDQGTYPFVTSSNPVAGGVTIGSGVGPSKINKVVGVCKAYTSRVGDGPFPTELFDEVGERIREVGHEYGTTTGRPRRVGWFDSVVMRHSRRVSGITNLSLNSIDVLSGLDTVKICVAYDLDGKRIDYYPANLEQLKRCKPIYEELPGWQEDITGVRSLEELPENARNYVRRVGELVGVRISTFSVGPGREQTNILESVWASI.

GTP is bound by residues 12-18 and 40-42; these read GDEGKGK and GHT. Asp-13 acts as the Proton acceptor in catalysis. Asp-13 and Gly-40 together coordinate Mg(2+). IMP contacts are provided by residues 13 to 16, 38 to 41, Thr-128, Arg-142, Gln-223, Thr-238, and Arg-302; these read DEGK and NAGH. Residue His-41 is the Proton donor of the active site. 298–304 provides a ligand contact to substrate; the sequence is TTTGRPR. GTP is bound by residues Arg-304, 330 to 332, and 412 to 414; these read SID and SVG.

Belongs to the adenylosuccinate synthetase family. Homodimer. The cofactor is Mg(2+).

The protein localises to the cytoplasm. It catalyses the reaction IMP + L-aspartate + GTP = N(6)-(1,2-dicarboxyethyl)-AMP + GDP + phosphate + 2 H(+). The protein operates within purine metabolism; AMP biosynthesis via de novo pathway; AMP from IMP: step 1/2. Plays an important role in the de novo pathway of purine nucleotide biosynthesis. Catalyzes the first committed step in the biosynthesis of AMP from IMP. In Streptococcus pyogenes serotype M4 (strain MGAS10750), this protein is Adenylosuccinate synthetase.